The sequence spans 460 residues: Carboxypeptidase DacB (460 aa).

The N-terminal stretch at 1–28 (MRPTRWRRSTHVAVGVAVLALVVAVVAA) is a signal peptide. The segment at 39–64 (AAEAVPPAPPPATADPGVVPVDLSAP) is disordered. Ser113 functions as the Acyl-ester intermediate in the catalytic mechanism. Lys116 acts as the Proton acceptor in catalysis. Ser294 is an active-site residue.

This sequence belongs to the peptidase S13 family.

Its function is as follows. Carboxypeptidase that cleaves terminal D-alanine from peptidoglycan in the mycobacterial cell wall. May cleave L-Lys-D-Ala and/or D-Ala-D-Ala peptide bonds. Exerts important effects on mycobacterial cell morphology and cell division. The chain is Carboxypeptidase DacB from Mycolicibacterium smegmatis (strain ATCC 700084 / mc(2)155) (Mycobacterium smegmatis).